The primary structure comprises 157 residues: Transcriptional regulator MraZ (157 aa).

2 SpoVT-AbrB domains span residues 7 to 54 (TYEC…PMKE) and 83 to 126 (VRII…DKDL).

This sequence belongs to the MraZ family. As to quaternary structure, forms oligomers.

The protein localises to the cytoplasm. It is found in the nucleoid. In Flavobacterium psychrophilum (strain ATCC 49511 / DSM 21280 / CIP 103535 / JIP02/86), this protein is Transcriptional regulator MraZ.